Consider the following 349-residue polypeptide: Protein-glutamate methylesterase/protein-glutamine glutaminase (349 aa).

A Response regulatory domain is found at 5–122 (RVLSVDDSAL…REGMLAYSEM (118 aa)). A 4-aspartylphosphate modification is found at D56. A CheB-type methylesterase domain is found at 152 to 344 (LLSSEKLIAI…QQMLAKISAG (193 aa)). Active-site residues include S164, H190, and D286.

The protein belongs to the CheB family. Phosphorylated by CheA. Phosphorylation of the N-terminal regulatory domain activates the methylesterase activity.

The protein localises to the cytoplasm. The catalysed reaction is [protein]-L-glutamate 5-O-methyl ester + H2O = L-glutamyl-[protein] + methanol + H(+). The enzyme catalyses L-glutaminyl-[protein] + H2O = L-glutamyl-[protein] + NH4(+). Involved in chemotaxis. Part of a chemotaxis signal transduction system that modulates chemotaxis in response to various stimuli. Catalyzes the demethylation of specific methylglutamate residues introduced into the chemoreceptors (methyl-accepting chemotaxis proteins or MCP) by CheR. Also mediates the irreversible deamidation of specific glutamine residues to glutamic acid. This is Protein-glutamate methylesterase/protein-glutamine glutaminase from Salmonella typhi.